The sequence spans 316 residues: Ribosomal RNA small subunit methyltransferase H (316 aa).

S-adenosyl-L-methionine contacts are provided by residues 35 to 37 (AGH), aspartate 55, phenylalanine 84, aspartate 105, and glutamine 112.

This sequence belongs to the methyltransferase superfamily. RsmH family.

The protein localises to the cytoplasm. The enzyme catalyses cytidine(1402) in 16S rRNA + S-adenosyl-L-methionine = N(4)-methylcytidine(1402) in 16S rRNA + S-adenosyl-L-homocysteine + H(+). Its function is as follows. Specifically methylates the N4 position of cytidine in position 1402 (C1402) of 16S rRNA. The sequence is that of Ribosomal RNA small subunit methyltransferase H from Streptococcus sanguinis (strain SK36).